The chain runs to 166 residues: Coiled-coil domain-containing protein 12 (166 aa).

M1 carries the N-acetylmethionine modification. Residues 1-56 (MEATTAGVGRLEEEALRRKERLKALREKTGRKDKEDGEPKTKHLREEEEEGEKHRE) form a disordered region. A coiled-coil region spans residues 8–28 (VGRLEEEALRRKERLKALREK). Positions 10 to 56 (RLEEEALRRKERLKALREKTGRKDKEDGEPKTKHLREEEEEGEKHRE) are enriched in basic and acidic residues. Position 53 is an N6-acetyllysine (K53). Residue K94 forms a Glycyl lysine isopeptide (Lys-Gly) (interchain with G-Cter in SUMO2) linkage. A coiled-coil region spans residues 117–144 (KRDVAKKLEKLKKRTQRAIAELIRERLK). Residues 147 to 166 (EDSLASAVDAATEQKTCDSD) form a disordered region. A phosphoserine mark is found at S149 and S165.

The sequence is that of Coiled-coil domain-containing protein 12 (CCDC12) from Homo sapiens (Human).